The sequence spans 357 residues: Sorbitol dehydrogenase (357 aa).

N-acetylalanine is present on Ala2. Position 45 (Cys45) interacts with Zn(2+). Tyr51 is a binding site for substrate. His70 and Glu71 together coordinate Zn(2+). Glu156 is a binding site for substrate. A Phosphoserine modification is found at Ser169. Residues Val184, Asp204, Arg209, 273–275, and 297–299 each bind NAD(+); these read VGM and VFR. 2 residues coordinate substrate: Arg299 and Tyr300.

It belongs to the zinc-containing alcohol dehydrogenase family. As to quaternary structure, homotetramer. It depends on Zn(2+) as a cofactor. Testis has the highest level of expression, followed by kidney, liver, and lung. Low levels of expression are also observed in lens, brain, and skeletal muscle. Expressed in sperm flagellum and very low expression in the sperm head.

Its subcellular location is the mitochondrion membrane. The protein localises to the cell projection. It localises to the cilium. The protein resides in the flagellum. The catalysed reaction is keto-D-fructose + NADH + H(+) = D-sorbitol + NAD(+). It catalyses the reaction xylitol + NAD(+) = D-xylulose + NADH + H(+). The enzyme catalyses L-iditol + NAD(+) = keto-L-sorbose + NADH + H(+). With respect to regulation, inhibited in vitro by p-hydroxymercuribenzoate, EDTA, l,l0-phenanthroline and N-ethylmaleimide. Polyol dehydrogenase that catalyzes the reversible NAD(+)-dependent oxidation of various sugar alcohols. Is active with D-sorbitol (D-glucitol) leading to the C2-oxidized product D-fructose. Is a key enzyme in the polyol pathway that interconverts glucose and fructose via sorbitol, which constitutes an important alternate route for glucose metabolism. May play a role in sperm motility by using sorbitol as an alternative energy source for sperm motility and protein tyrosine phosphorylation. Has no activity on ethanol. Cannot use NADP(+) as the electron acceptor. The chain is Sorbitol dehydrogenase (Sord) from Mus musculus (Mouse).